A 1794-amino-acid chain; its full sequence is Non-reducing polyketide synthase nscA (1794 aa).

Positions 19 to 256 are N-terminal acylcarrier protein transacylase domain (SAT); sequence DLKDLFRRLH…PLPVYDGLCH (238 aa). The Ketosynthase family 3 (KS3) domain occupies 389-822; the sequence is ASKLAIVGMA…GGNTTVLLED (434 aa). Residues 428 to 440 show a composition bias toward basic and acidic residues; the sequence is DRFDLNTHYDPTG. A disordered region spans residues 428–448; it reads DRFDLNTHYDPTGKTENATQT. Residues Cys562, His697, and His740 each act as for beta-ketoacyl synthase activity in the active site. Residues 927–1230 are malonyl-CoA:ACP transacylase (MAT) domain; it reads TFTGQGAYYS…SVISSCRRNE (304 aa). The product template (PT) domain stretch occupies residues 1314 to 1633; the sequence is TSLVHQITTE…RLLMDRFFSP (320 aa). Residues 1318-1454 form an N-terminal hotdog fold region; the sequence is HQITTETVEA…CVVRFEDPAA (137 aa). The 311-residue stretch at 1318–1628 folds into the PKS/mFAS DH domain; it reads HQITTETVEA…FRRVPRLLMD (311 aa). The active-site Proton acceptor; for dehydratase activity is the His1350. The segment at 1482-1628 is C-terminal hotdog fold; that stretch reads ASKLSKPLAY…FRRVPRLLMD (147 aa). Asp1539 serves as the catalytic Proton donor; for dehydratase activity. Residues 1637–1719 form a disordered region; that stretch reads SHTEKQLQET…ATSDRGDSTD (83 aa). The span at 1644 to 1655 shows a compositional bias: polar residues; that stretch reads QETAPSATNVKK. One can recognise a Carrier domain in the interval 1717–1794; sequence STDAGVVGQC…EMTAWLEEYC (78 aa). O-(pantetheine 4'-phosphoryl)serine is present on Ser1754.

It depends on pantetheine 4'-phosphate as a cofactor.

The protein operates within secondary metabolite biosynthesis. Functionally, non-reducing polyketide synthase; part of the gene cluster that mediates the biosynthesis of neosartoricin, a prenylated anthracenone that exhibits T-cell antiproliferative activity, suggestive of a physiological role as an immunosuppressive agent. The non-reducing polyketide synthase nscA probably synthesizes and cyclizes the decaketide backbone. The hydrolase nscB then mediates the product release through hydrolysis followed by spontaneous decarboxylation. The prenyltransferase nscD catalyzes the addition of the dimethylallyl group to the aromatic C5. The FAD-dependent monooxygenase nscC is then responsible for the stereospecific hydroxylation at C2. There is no gene encoding O-acetyltransferase in the nsc gene cluster; thus, the last step of 2-O-acetylation leading to neosartoricin may be catalyzed by an unidentified O-acetyltransferase. In Aspergillus fumigatus (strain ATCC MYA-4609 / CBS 101355 / FGSC A1100 / Af293) (Neosartorya fumigata), this protein is Non-reducing polyketide synthase nscA.